We begin with the raw amino-acid sequence, 433 residues long: Serine hydroxymethyltransferase (433 aa).

121–123 (AHV) provides a ligand contact to (6S)-5,6,7,8-tetrahydrofolate. Lys-227 carries the post-translational modification N6-(pyridoxal phosphate)lysine. Glu-243 provides a ligand contact to (6S)-5,6,7,8-tetrahydrofolate.

It belongs to the SHMT family. As to quaternary structure, homodimer. Pyridoxal 5'-phosphate serves as cofactor.

The protein localises to the cytoplasm. It carries out the reaction 5,10-methylenetetrahydrosulfopterin + glycine + H2O = tetrahydrosulfopterin + L-serine. It functions in the pathway amino-acid biosynthesis; glycine biosynthesis; glycine from L-serine: step 1/1. Is completely inhibited by addition of NaCNBH(3) in vitro; this reagent is a known inhibitor of PLP enzymes, that reduces the internal aldimine of PLP to the catalytically inactive and stable secondary amine. Is also inhibited by L-cysteine, which forms a thiazolidine complex with the active site PLP. Its function is as follows. Catalyzes the reversible interconversion of serine and glycine with the modified folate sulfopterin serving as the one-carbon carrier. Cannot use tetrahydrofolate (THF or H4PteGlu) as the pteridine substrate. Also exhibits a pteridine-independent aldolase activity toward beta-hydroxyamino acids, producing glycine and aldehydes, via a retro-aldol mechanism. Thus, is able to catalyze the cleavage of both allo-threonine and beta-phenylserine. This Saccharolobus solfataricus (strain ATCC 35092 / DSM 1617 / JCM 11322 / P2) (Sulfolobus solfataricus) protein is Serine hydroxymethyltransferase.